Consider the following 371-residue polypeptide: Cytochrome b (371 aa).

A run of 4 helical transmembrane segments spans residues 25-45 (FGSMLLTCLMLQVLTGFFLAI), 69-90 (WIMQNTHAIGASLFFICIYIHI), 105-125 (WLSGVTLLMTLMATAFFGYVL), and 170-190 (FCALHFILPFIIISLSSIHII). Residues histidine 75 and histidine 89 each coordinate heme b. Residues histidine 174 and histidine 188 each coordinate heme b. Histidine 193 is a binding site for a ubiquinone. 4 consecutive transmembrane segments (helical) span residues 218-238 (YKDFMTTTSMIILLPISLSVS), 280-300 (LGGTLALLMSILILTLPPFTH), 312-332 (LSQTLFWTLIATFVMITWTAT), and 339-358 (FITISQLTSIFYFSFFIMNP).

Belongs to the cytochrome b family. The cytochrome bc1 complex contains 3 respiratory subunits (MT-CYB, CYC1 and UQCRFS1), 2 core proteins (UQCRC1 and UQCRC2) and probably 6 low-molecular weight proteins. Heme b is required as a cofactor.

It localises to the mitochondrion inner membrane. In terms of biological role, component of the ubiquinol-cytochrome c reductase complex (complex III or cytochrome b-c1 complex) that is part of the mitochondrial respiratory chain. The b-c1 complex mediates electron transfer from ubiquinol to cytochrome c. Contributes to the generation of a proton gradient across the mitochondrial membrane that is then used for ATP synthesis. In Micrurus tener microgalbineus (Spotted coral snake), this protein is Cytochrome b (MT-CYB).